The primary structure comprises 316 residues: Ribosomal RNA small subunit methyltransferase H (316 aa).

S-adenosyl-L-methionine is bound by residues 35 to 37 (GGH), Asp55, Phe79, Asp101, and Gln108. A disordered region spans residues 291 to 316 (ALKPSDQEVELNPRSRSSVLRVAEKL).

This sequence belongs to the methyltransferase superfamily. RsmH family.

It localises to the cytoplasm. It carries out the reaction cytidine(1402) in 16S rRNA + S-adenosyl-L-methionine = N(4)-methylcytidine(1402) in 16S rRNA + S-adenosyl-L-homocysteine + H(+). Functionally, specifically methylates the N4 position of cytidine in position 1402 (C1402) of 16S rRNA. The sequence is that of Ribosomal RNA small subunit methyltransferase H from Vibrio cholerae serotype O1 (strain ATCC 39315 / El Tor Inaba N16961).